The following is a 700-amino-acid chain: non-specific serine/threonine protein kinase Cdc7 (700 aa).

The 518-residue stretch at 127–644 (FDVHSRIGNG…AEEALKHPFF (518 aa)) folds into the Protein kinase domain. ATP is bound by residues 133–141 (IGNGTFSTV) and lysine 163. The Proton acceptor role is filled by aspartate 250.

The protein belongs to the protein kinase superfamily. Ser/Thr protein kinase family. As to quaternary structure, component of the Dbf4-dependent kinase (DDK) complex consisting of Cdc7 and the Dbf4 ortholog chif. Interacts with chif (via the processed polypeptide Chiffon-A); the interaction is direct.

The catalysed reaction is L-seryl-[protein] + ATP = O-phospho-L-seryl-[protein] + ADP + H(+). It carries out the reaction L-threonyl-[protein] + ATP = O-phospho-L-threonyl-[protein] + ADP + H(+). With respect to regulation, activated by chif. Inhibited by the synthetic compound XL413. Catalytic component of the Dbf4-dependent kinase (DDK) complex. Phosphorylates components of the pre-replication complex, including Mcm2 and, to a lesser extent, Mcm4. Phosphorylates histones, including H3 and H2B. Required for DNA replication and mitotic proliferation, including during the endoreplication and amplification stages of DNA replication in egg chamber follicle cells of the ovary. The chain is non-specific serine/threonine protein kinase Cdc7 from Drosophila melanogaster (Fruit fly).